Here is a 57-residue protein sequence, read N- to C-terminus: Large ribosomal subunit protein bL32 (57 aa).

Belongs to the bacterial ribosomal protein bL32 family.

The chain is Large ribosomal subunit protein bL32 from Shouchella clausii (strain KSM-K16) (Alkalihalobacillus clausii).